Here is a 293-residue protein sequence, read N- to C-terminus: Ribosomal protein L11 methyltransferase (293 aa).

The S-adenosyl-L-methionine site is built by T145, G166, D188, and N229.

Belongs to the methyltransferase superfamily. PrmA family.

Its subcellular location is the cytoplasm. It catalyses the reaction L-lysyl-[protein] + 3 S-adenosyl-L-methionine = N(6),N(6),N(6)-trimethyl-L-lysyl-[protein] + 3 S-adenosyl-L-homocysteine + 3 H(+). Methylates ribosomal protein L11. This is Ribosomal protein L11 methyltransferase from Halorhodospira halophila (strain DSM 244 / SL1) (Ectothiorhodospira halophila (strain DSM 244 / SL1)).